We begin with the raw amino-acid sequence, 654 residues long: Tetratricopeptide repeat protein 30 homolog (654 aa).

TPR repeat units lie at residues 10-43, 44-76, 143-176, 178-210, 384-417, 449-483, and 533-566; these read EGHV…ANTR, AGLS…APKE, ADTL…GGFN, LVAY…GVRN, LAAK…YLPV, AVWR…HSDD, and CIVN…GAGG.

This sequence belongs to the TTC30/dfy-1/fleer family.

The protein localises to the cell projection. Its subcellular location is the cilium. Its function is as follows. Required for polyglutamylation of axonemal tubulin in sensory cilia. Plays a role in anterograde intraflagellar transport (IFT), the process by which cilia precursors are transported from the base of the cilium to the site of their incorporation at the tip. In Drosophila pseudoobscura pseudoobscura (Fruit fly), this protein is Tetratricopeptide repeat protein 30 homolog.